Reading from the N-terminus, the 419-residue chain is uncharacterized protein (419 aa).

12 helical membrane-spanning segments follow: residues R15–L35, A36–V56, Y77–Q99, V104–L126, M140–L160, I166–L186, F213–A233, Q246–L266, L282–G302, V309–F329, F351–M371, and L377–G397.

The protein belongs to the major facilitator superfamily.

Its subcellular location is the cell membrane. This is an uncharacterized protein from Mycobacterium tuberculosis (strain CDC 1551 / Oshkosh).